The sequence spans 396 residues: Probable peptidoglycan glycosyltransferase FtsW (396 aa).

A run of 9 helical transmembrane segments spans residues 17–37, 61–81, 83–103, 117–137, 159–179, 198–218, 274–294, 316–336, and 350–370; these read FCDG…WVMV, VFVL…MAWW, ANGP…LVAG, GIPL…VYLA, MVMA…AVVV, FLLL…AEPY, FVFA…VIGL, FAAY…FINI, and LPLL…VGML.

It belongs to the SEDS family. FtsW subfamily.

The protein localises to the cell inner membrane. It catalyses the reaction [GlcNAc-(1-&gt;4)-Mur2Ac(oyl-L-Ala-gamma-D-Glu-L-Lys-D-Ala-D-Ala)](n)-di-trans,octa-cis-undecaprenyl diphosphate + beta-D-GlcNAc-(1-&gt;4)-Mur2Ac(oyl-L-Ala-gamma-D-Glu-L-Lys-D-Ala-D-Ala)-di-trans,octa-cis-undecaprenyl diphosphate = [GlcNAc-(1-&gt;4)-Mur2Ac(oyl-L-Ala-gamma-D-Glu-L-Lys-D-Ala-D-Ala)](n+1)-di-trans,octa-cis-undecaprenyl diphosphate + di-trans,octa-cis-undecaprenyl diphosphate + H(+). It functions in the pathway cell wall biogenesis; peptidoglycan biosynthesis. Its function is as follows. Peptidoglycan polymerase that is essential for cell division. The chain is Probable peptidoglycan glycosyltransferase FtsW from Halomonas elongata (strain ATCC 33173 / DSM 2581 / NBRC 15536 / NCIMB 2198 / 1H9).